The following is a 138-amino-acid chain: Small ribosomal subunit protein uS9 (138 aa).

The tract at residues 99–138 is disordered; the sequence is DPDNRPPLKTEGYLTRDPRAKERKKYGLHKARKAPQYSKR. Basic and acidic residues predominate over residues 100–118; the sequence is PDNRPPLKTEGYLTRDPRA. Positions 119–138 are enriched in basic residues; it reads KERKKYGLHKARKAPQYSKR.

This sequence belongs to the universal ribosomal protein uS9 family.

This chain is Small ribosomal subunit protein uS9, found in Nostoc punctiforme (strain ATCC 29133 / PCC 73102).